The chain runs to 265 residues: 3-methyl-2-oxobutanoate hydroxymethyltransferase (265 aa).

Mg(2+) contacts are provided by Asp44 and Asp83. Residues 44-45, Asp83, and Lys113 contribute to the 3-methyl-2-oxobutanoate site; that span reads DS. Residue Glu115 coordinates Mg(2+). Residue Glu183 is the Proton acceptor of the active site.

This sequence belongs to the PanB family. In terms of assembly, homodecamer; pentamer of dimers. Requires Mg(2+) as cofactor.

It localises to the cytoplasm. The enzyme catalyses 3-methyl-2-oxobutanoate + (6R)-5,10-methylene-5,6,7,8-tetrahydrofolate + H2O = 2-dehydropantoate + (6S)-5,6,7,8-tetrahydrofolate. It functions in the pathway cofactor biosynthesis; (R)-pantothenate biosynthesis; (R)-pantoate from 3-methyl-2-oxobutanoate: step 1/2. Functionally, catalyzes the reversible reaction in which hydroxymethyl group from 5,10-methylenetetrahydrofolate is transferred onto alpha-ketoisovalerate to form ketopantoate. This chain is 3-methyl-2-oxobutanoate hydroxymethyltransferase, found in Leptospira interrogans serogroup Icterohaemorrhagiae serovar copenhageni (strain Fiocruz L1-130).